The following is a 389-amino-acid chain: Cellobiose 2-epimerase (389 aa).

This sequence belongs to the cellobiose 2-epimerase family.

It localises to the cytoplasm. It catalyses the reaction D-cellobiose = beta-D-glucosyl-(1-&gt;4)-D-mannopyranose. Enhanced by Mg(2+) and Ca(2+) ions, ethylenediaminetetraacetic acid, ethylene glycol tetraacetic acid and citrate. Inhibited by Al(3+), Fe(3+), Co(2+), Cu(2+), Zn(2+), Pb(2+) and Ag(+) ions, iodoacetate, 4-chloromercuribenzoate and N-bromosuccinimide. Functionally, catalyzes the reversible epimerization of cellobiose to 4-O-beta-D-glucopyranosyl-D-mannose (Glc-Man). Can also epimerize cellotriose to Glc-Glc-Man, cellotetraose to Glc-Glc-Glc-Man, and lactose to epilactose. The polypeptide is Cellobiose 2-epimerase (ce-ne1) (Ruminococcus albus).